The following is a 228-amino-acid chain: Abnormal cell migration protein 18 (228 aa).

The N-terminal stretch at 1–19 (MTFTLRLLVLCTVYSYVIS) is a signal peptide. Residues N135 and N159 are each glycosylated (N-linked (GlcNAc...) asparagine).

As to expression, expressed in body wall muscle.

Its subcellular location is the secreted. The protein resides in the extracellular space. It localises to the extracellular matrix. It is found in the basement membrane. Functionally, required for the directional control of distal tip cell migration during gonadogenesis, probably by recruiting fibulin fbl-1 to the gonad basement membrane. This Caenorhabditis elegans protein is Abnormal cell migration protein 18.